Consider the following 762-residue polypeptide: MTTPAQAPREEVSLSPSLASPPLMALPPPQPSFPGDNATSPTREPTNGNPPETTNTPAQSSPPPETPLSSPPPEPSPPSPSLTGPPPTTIPVSPPPEPSPPPPLPTEAPPPANPVSSPPPESSPPPPPPTEAPPTTPITSPSPPTNPPPPPESPPSLPAPDPPSNPLPPPKLVPPSHSPPRHLPSPPASEIPPPPRHLPSPPASERPSTPPSDSEHPSPPPPGHPKRREQPPPPGSKRPTPSPPSPSDSKRPVHPSPPSPPEETLPPPKPSPDPLPSNSSSPPTLLPPSSVVSPPSPPRKSVSGPDNPSPNNPTPVTDNSSSSGISIAAVVGVSIGVALVLLTLIGVVVCCLKKRKKRLSTIGGGYVMPTPMESSSPRSDSALLKTQSSAPLVGNRSSNRTYLSQSEPGGFGQSRELFSYEELVIATNGFSDENLLGEGGFGRVYKGVLPDERVVAVKQLKIGGGQGDREFKAEVDTISRVHHRNLLSMVGYCISENRRLLIYDYVPNNNLYFHLHAAGTPGLDWATRVKIAAGAARGLAYLHEDCHPRIIHRDIKSSNILLENNFHALVSDFGLAKLALDCNTHITTRVMGTFGYMAPEYASSGKLTEKSDVFSFGVVLLELITGRKPVDASQPLGDESLVEWARPLLSNATETEEFTALADPKLGRNYVGVEMFRMIEAAAACIRHSATKRPRMSQIVRAFDSLAEEDLTNGMRLGESEIINSAQQSAEIRLFRRMAFGSQNYSTDSLTRNSYISKDENL.

A disordered region spans residues 1-322 (MTTPAQAPRE…PTPVTDNSSS (322 aa)). The Extracellular portion of the chain corresponds to 1-328 (MTTPAQAPRE…NSSSSGISIA (328 aa)). The segment covering 13–23 (SLSPSLASPPL) has biased composition (low complexity). Asparagine 37 is a glycosylation site (N-linked (GlcNAc...) asparagine). Low complexity predominate over residues 41–57 (PTREPTNGNPPETTNTP). Pro residues-rich tracts occupy residues 60-210 (SSPP…PSTP), 231-246 (PPPP…PPSP), and 254-275 (HPSP…PDPL). Residues 276–305 (PSNSSSPPTLLPPSSVVSPPSPPRKSVSGP) show a composition bias toward low complexity. N-linked (GlcNAc...) asparagine glycosylation is found at asparagine 278 and asparagine 319. A helical membrane pass occupies residues 329–349 (AVVGVSIGVALVLLTLIGVVV). Residues 350–762 (CCLKKRKKRL…NSYISKDENL (413 aa)) are Cytoplasmic-facing. The segment at 370–410 (TPMESSSPRSDSALLKTQSSAPLVGNRSSNRTYLSQSEPGG) is disordered. The span at 372-407 (MESSSPRSDSALLKTQSSAPLVGNRSSNRTYLSQSE) shows a compositional bias: polar residues. The 277-residue stretch at 430 to 706 (FSDENLLGEG…SQIVRAFDSL (277 aa)) folds into the Protein kinase domain. Residues 436–444 (LGEGGFGRV) and lysine 458 contribute to the ATP site. Aspartate 554 acts as the Proton acceptor in catalysis.

This sequence belongs to the protein kinase superfamily. Ser/Thr protein kinase family. In terms of assembly, interacts with KIPK1 and KIPK2 (via its cytosolic domain). Mostly expressed in inflorescence bolts and flower buds, and, to a lower extent, in roots, seedlings, leaves and siliques.

Its subcellular location is the cell membrane. The enzyme catalyses L-seryl-[protein] + ATP = O-phospho-L-seryl-[protein] + ADP + H(+). It catalyses the reaction L-threonyl-[protein] + ATP = O-phospho-L-threonyl-[protein] + ADP + H(+). Could be involved in the negative regulation of root growth. The sequence is that of Proline-rich receptor-like protein kinase PERK10 (PERK10) from Arabidopsis thaliana (Mouse-ear cress).